A 136-amino-acid polypeptide reads, in one-letter code: MLQPKRTKFRKVHTGRNRGLAKGTEVSFGSFGLKAVGRGRLTARQIEAARRAMTRHIKRQGKIWIRVFPDKPITEKPLEVRQGKGKGNVEYWVAQIQPGKVMYEVDGVPEELAREAFRLAARKLPFKTTFVTKQVM.

This sequence belongs to the universal ribosomal protein uL16 family. In terms of assembly, part of the 50S ribosomal subunit.

Functionally, binds 23S rRNA and is also seen to make contacts with the A and possibly P site tRNAs. The sequence is that of Large ribosomal subunit protein uL16 from Vibrio vulnificus (strain YJ016).